Reading from the N-terminus, the 190-residue chain is Threonylcarbamoyl-AMP synthase (190 aa).

The YrdC-like domain occupies 7–190 (SEAVAHAVAV…ALTGELFRQG (184 aa)).

The protein belongs to the SUA5 family. TsaC subfamily.

The protein resides in the cytoplasm. It catalyses the reaction L-threonine + hydrogencarbonate + ATP = L-threonylcarbamoyladenylate + diphosphate + H2O. Its function is as follows. Required for the formation of a threonylcarbamoyl group on adenosine at position 37 (t(6)A37) in tRNAs that read codons beginning with adenine. Catalyzes the conversion of L-threonine, HCO(3)(-)/CO(2) and ATP to give threonylcarbamoyl-AMP (TC-AMP) as the acyladenylate intermediate, with the release of diphosphate. The sequence is that of Threonylcarbamoyl-AMP synthase from Klebsiella pneumoniae subsp. pneumoniae (strain ATCC 700721 / MGH 78578).